The primary structure comprises 618 residues: Matrix metalloproteinase-24 (618 aa).

Residues 1–41 (MPRSRGGRAAPGQAARWSGWRAPGRLLPLLPALCCLAAAAG) form the signal peptide. Positions 42–128 (AGKPAGADAP…HLSRRRRNKR (87 aa)) are excised as a propeptide. At 42-575 (AGKPAGADAP…IDDVPGSVNA (534 aa)) the chain is on the extracellular side. Residues 110 to 117 (PRCGVPDH) carry the Cysteine switch motif. Positions 112 and 255 each coordinate Zn(2+). The active site involves Glu-256. Residues His-259 and His-265 each contribute to the Zn(2+) site. The disordered stretch occupies residues 296 to 352 (QKIYGPPAEPLEPTRPLPTLPVRRIHSPSERKHERQPRPPRPPLGDRPSTPGAKPNI). The segment covering 302–314 (PAEPLEPTRPLPT) has biased composition (pro residues). Residues 322 to 332 (SPSERKHERQP) are compositionally biased toward basic and acidic residues. 4 Hemopexin repeats span residues 350–398 (PNIC…WKGL), 399–444 (PARI…GSCL), 446–494 (REGI…KGIP), and 495–542 (QAPQ…WMGC). A disulfide bridge links Cys-353 with Cys-542. Residues 576–596 (VAVVVPCTLSLCLLVLLYTIF) form a helical membrane-spanning segment. Residues 597–618 (QFKNKTGPQPVTYYKRPVQEWV) lie on the Cytoplasmic side of the membrane. Residues 616-618 (EWV) carry the PDZ-binding motif.

It belongs to the peptidase M10A family. As to quaternary structure, interacts (via PDZ-binding motif) with APBA3 (via PDZ domain). Interacts with GRIP1 and GRIP2. It depends on Zn(2+) as a cofactor. Ca(2+) serves as cofactor. In terms of processing, cleaved by a furin endopeptidase in the trans-Golgi network. Predominantly expressed in the nervous system: while enriched in the central nervous system, expression is also detected in the peripheral nervous system, including the trigeminal ganglion. Expression is not restricted to the nervous system: it is also enriched in the thymus, with a lower level of expression present in the aorta. In brain, high expression is present in the brain parenchyma, particularly within the neocortex.

The protein localises to the cell membrane. It is found in the golgi apparatus. Its subcellular location is the trans-Golgi network membrane. It localises to the secreted. The protein resides in the extracellular space. The protein localises to the extracellular matrix. Its function is as follows. Metalloprotease that mediates cleavage of N-cadherin (CDH2) and acts as a regulator of neuro-immune interactions and neural stem cell quiescence. Involved in cell-cell interactions between nociceptive neurites and mast cells, possibly by mediating cleavage of CDH2, thereby acting as a mediator of peripheral thermal nociception and inflammatory hyperalgesia. Key regulator of neural stem cells quiescence by mediating cleavage of CDH2, affecting CDH2-mediated anchorage of neural stem cells to ependymocytes in the adult subependymal zone, leading to modulate their quiescence. May play a role in axonal growth. Able to activate progelatinase A. May also be a proteoglycanase involved in degradation of proteoglycans, such as dermatan sulfate and chondroitin sulfate proteoglycans. Cleaves partially fibronectin, but not collagen type I, nor laminin. The protein is Matrix metalloproteinase-24 (Mmp24) of Rattus norvegicus (Rat).